The primary structure comprises 59 residues: SPbeta prophage-derived uncharacterized protein YosB (59 aa).

The polypeptide is SPbeta prophage-derived uncharacterized protein YosB (yosB) (Bacillus subtilis (strain 168)).